Here is a 286-residue protein sequence, read N- to C-terminus: Aminoglycoside N(3)-acetyltransferase III (286 aa).

It belongs to the antibiotic N-acetyltransferase family.

The catalysed reaction is a 2-deoxystreptamine antibiotic + acetyl-CoA = an N(3)-acetyl-2-deoxystreptamine antibiotic + CoA + H(+). Resistance to antibiotics containing the 2-deoxy-streptamine ring including gentamicin, kanamycin, tobramycin, neomycin and apramycin. This is Aminoglycoside N(3)-acetyltransferase III (aacC2) from Acinetobacter baumannii.